The primary structure comprises 363 residues: Protein-arginine kinase (363 aa).

Residues 24 to 255 enclose the Phosphagen kinase C-terminal domain; sequence IVLSSRIRLA…QQLIAQERAA (232 aa). ATP-binding positions include 27-31, H92, R126, 177-181, and 208-213; these read SSRIR, RASVM, and RGTYGE. Positions 338-343 match the RDXXRA motif of the pArg binding pocket involved in allosteric regulation motif; the sequence is RDVRRA.

The protein belongs to the ATP:guanido phosphotransferase family.

It catalyses the reaction L-arginyl-[protein] + ATP = N(omega)-phospho-L-arginyl-[protein] + ADP + H(+). Appears to be allosterically activated by the binding of pArg-containing polypeptides to the pArg-binding pocket localized in the C-terminal domain of McsB. In terms of biological role, catalyzes the specific phosphorylation of arginine residues in a large number of proteins. Is part of the bacterial stress response system. Protein arginine phosphorylation has a physiologically important role and is involved in the regulation of many critical cellular processes, such as protein homeostasis, motility, competence, and stringent and stress responses, by regulating gene expression and protein activity. This chain is Protein-arginine kinase, found in Geobacillus thermodenitrificans (strain NG80-2).